The primary structure comprises 652 residues: MSQIHKHTIPANIADRCLINPQQYEAMYQQSINVPDTFWGEQGKILDWIKPYQKVKNTSFAPGNVSIKWYEDGTLNLAANCLDRHLQENGDRTAIIWEGDDASQSKHISYKELHRDVCRFANTLLELGIKKGDVVAIYMPMVPEAAVAMLACARIGAVHSVIFGGFSPEAVAGRIIDSNSRLVITSDEGVRAGRSIPLKKNVDDALKNPNVTSVEHVVVLKRTGGKIDWQEGRDLWWHDLVEQASDQHQAEEMNAEDPLFILYTSGSTGKPKGVLHTTGGYLVYAALTFKYVFDYHPGDIYWCTADVGWVTGHSYLLYGPLACGATTLMFEGVPNWPTPARMAQVVDKHQVNILYTAPTAIRALMAEGDKAIEGTDRSSLRILGSVGEPINPEAWEWYWKKIGNEKCPVVDTWWQTETGGFMITPLPGATELKAGSATRPFFGVQPALVDNEGNPLEGATEGSLVITDSWPGQARTLFGDHERFEQTYFSTFKNMYFSGDGARRDEDGYYWITGRVDDVLNVSGHRLGTAEIESALVAHPKIAEAAVVGIPHNIKGQAIYAYVTLNHGEEPSPELYAEVRNWVRKEIGPLATPDVLHWTDSLPKTRSGKIMRRILRKIAAGDTSNLGDTSTLADPGVVEKLLEEKQAIAMPS.

Residues 191 to 194 (RAGR), threonine 311, and asparagine 335 contribute to the CoA site. ATP is bound by residues 387–389 (GEP), 411–416 (DTWWQT), aspartate 500, and arginine 515. Serine 523 is a CoA binding site. ATP is bound at residue arginine 526. Positions 537, 539, and 542 each coordinate Mg(2+). CoA is bound at residue arginine 584. Lysine 609 carries the N6-acetyllysine; by autocatalysis modification.

It belongs to the ATP-dependent AMP-binding enzyme family. Forms a 1:1 complex with CobB/NAD-dependent deacetylase. Requires Mg(2+) as cofactor. In terms of processing, autoacetylated. Deacetylation by CobB activates the enzyme.

It catalyses the reaction acetate + ATP + CoA = acetyl-CoA + AMP + diphosphate. In terms of biological role, catalyzes the conversion of acetate into acetyl-CoA (AcCoA), an essential intermediate at the junction of anabolic and catabolic pathways. Acs undergoes a two-step reaction. In the first half reaction, Acs combines acetate with ATP to form acetyl-adenylate (AcAMP) intermediate. In the second half reaction, it can then transfer the acetyl group from AcAMP to the sulfhydryl group of CoA, forming the product AcCoA. Enables the cell to use acetate during aerobic growth to generate energy via the TCA cycle, and biosynthetic compounds via the glyoxylate shunt. Acetylates CheY, the response regulator involved in flagellar movement and chemotaxis. The chain is Acetyl-coenzyme A synthetase from Escherichia coli (strain K12).